Reading from the N-terminus, the 874-residue chain is MSTPTFTVADIRKSFLDFFASKGHTIVESSPLVPGNDPTLMFTNSGMVQFKDVFLGTDKRPYKRATSVQTCLRAGGKHNDLENVGYTARHHTFFEMLGNWSFGDYFKRESLKWAWELLTEVYKLPKERLLATVYAEDDEAYDIWTKEIGLPPERVIRIGDNKGGRYKSDNFWMMADTGPCGPCSEIFYDHGAHVAGGPPGSPDEDGDRFIEIWNNVFMQFDMDEQGNVKPLPAPCVDTGMGLERLAAILQHVHSNYEIDLFQALIKAAARETHIADIETPSLKVIADHIRATAFLVADGVIPSNEGRGYVQRRIVRRAIRHGYKLGQKTPFFHKLVKDLVAVMGDAYPKIREQEARITEVLRVEEERFFETLANGMEILDAALAGGAKVLPGDVAFKLHDTYGFPLDLTNDVCRERGLSVDEAGFQTAMEEQKNKARAAGKFKMDRALEYTGDANAFTGYQKLAEAAKVVALYAEGSAVQELKAGQSGVVVLDTTPFYAESGGQVGDQGVISTAGARFAVEDTLKIKADVFGHHGVLESGSLKVGDAVQAEVDTQLRAATMRNHSVTHIMHKALREVLGDHVQQKGSLVNAERTRFDFAHNQPVTAEEIREIERRVNAEILANTPTDARVMDIESAKATGAMMLFGEKYGDSVRVLDIGSSRELCGGTHVQRTGDIGLFKVVGEGGVAAGVRRIEAVTGENALAYLQSLESTVDQAAAALKAPTAELNTRIGGALEQIRALEKEVAALKGKLASSQGDELAGQAVDVKGIKVLAARLEGADAKTLRDTMDKLKDKLGAAAIVLAAVDGDKVQLAAGVTKAETSRIKAGDLVNFVASQVGGKGGGKPDMAMAGGTDASGLPAALAGVHAWVAERV.

Zn(2+)-binding residues include His564, His568, Cys665, and His669.

It belongs to the class-II aminoacyl-tRNA synthetase family. Zn(2+) serves as cofactor.

The protein localises to the cytoplasm. The enzyme catalyses tRNA(Ala) + L-alanine + ATP = L-alanyl-tRNA(Ala) + AMP + diphosphate. Functionally, catalyzes the attachment of alanine to tRNA(Ala) in a two-step reaction: alanine is first activated by ATP to form Ala-AMP and then transferred to the acceptor end of tRNA(Ala). Also edits incorrectly charged Ser-tRNA(Ala) and Gly-tRNA(Ala) via its editing domain. The chain is Alanine--tRNA ligase from Delftia acidovorans (strain DSM 14801 / SPH-1).